The following is a 178-amino-acid chain: Interleukin-10 (178 aa).

An N-terminal signal peptide occupies residues 1 to 18 (MPRSALLCCLILLAGVAA). 2 disulfide bridges follow: C30–C126 and C80–C132. A glycan (N-linked (GlcNAc...) asparagine) is linked at N134.

This sequence belongs to the IL-10 family. In terms of assembly, homodimer. Interacts with IL10RA and IL10RB.

It is found in the secreted. Major immune regulatory cytokine that acts on many cells of the immune system where it has profound anti-inflammatory functions, limiting excessive tissue disruption caused by inflammation. Mechanistically, IL10 binds to its heterotetrameric receptor comprising IL10RA and IL10RB leading to JAK1 and STAT2-mediated phosphorylation of STAT3. In turn, STAT3 translocates to the nucleus where it drives expression of anti-inflammatory mediators. Targets antigen-presenting cells (APCs) such as macrophages and monocytes and inhibits their release of pro-inflammatory cytokines including granulocyte-macrophage colony-stimulating factor /GM-CSF, granulocyte colony-stimulating factor/G-CSF, IL-1 alpha, IL-1 beta, IL-6, IL-8 and TNF-alpha. Also interferes with antigen presentation by reducing the expression of MHC-class II and co-stimulatory molecules, thereby inhibiting their ability to induce T cell activation. In addition, controls the inflammatory response of macrophages by reprogramming essential metabolic pathways including mTOR signaling. This Lama glama (Llama) protein is Interleukin-10 (IL10).